Reading from the N-terminus, the 525-residue chain is GMP synthase [glutamine-hydrolyzing] (525 aa).

The 199-residue stretch at 9–207 folds into the Glutamine amidotransferase type-1 domain; the sequence is RILILDFGSQ…VRDICQCEAL (199 aa). Residue Cys-86 is the Nucleophile of the active site. Catalysis depends on residues His-181 and Glu-183. The GMPS ATP-PPase domain occupies 208-400; that stretch reads WTPAKIIDDA…LGLPYDMLYR (193 aa). Position 235 to 241 (235 to 241) interacts with ATP; sequence SGGVDSS.

In terms of assembly, homodimer.

The enzyme catalyses XMP + L-glutamine + ATP + H2O = GMP + L-glutamate + AMP + diphosphate + 2 H(+). The protein operates within purine metabolism; GMP biosynthesis; GMP from XMP (L-Gln route): step 1/1. Catalyzes the synthesis of GMP from XMP. This chain is GMP synthase [glutamine-hydrolyzing], found in Shigella sonnei (strain Ss046).